The sequence spans 88 residues: Large ribosomal subunit protein bL27 (88 aa).

Positions 1–21 (MAHKKGASSSRNGRDSAAQRL) are disordered.

The protein belongs to the bacterial ribosomal protein bL27 family.

The polypeptide is Large ribosomal subunit protein bL27 (Mycobacterium marinum (strain ATCC BAA-535 / M)).